A 1251-amino-acid polypeptide reads, in one-letter code: Immunoglobulin-like and fibronectin type III domain-containing protein 1 (1251 aa).

The Ig-like 1 domain maps to 29–119 (PDFEQKPVTS…GEAACSVRLT (91 aa)). The interval 61 to 81 (RWQNSKGDLSDSSKYKISSSP) is disordered. A coiled-coil region spans residues 188 to 221 (IVDYRGMLRRLQEMKKEQEDKMAQYINTISSLRH). The 90-residue stretch at 309 to 398 (PRVVVPLAET…SSAWLVVEAG (90 aa)) folds into the Ig-like 2 domain. Positions 403–433 (LQSTSADHKLQSRRSGKDGRLDIYGERRDAT) are enriched in basic and acidic residues. The disordered stretch occupies residues 403–454 (LQSTSADHKLQSRRSGKDGRLDIYGERRDATRSSTSRYKPGTGSFSKDAQGP). A compositionally biased stretch (polar residues) spans 434–449 (RSSTSRYKPGTGSFSK). The region spanning 454-539 (PMGHFSQGLA…GDQQSEATLT (86 aa)) is the Ig-like 3 domain. Fibronectin type-III domains are found at residues 646-741 (PPQG…VAPE), 746-845 (APSA…MRPP), and 847-942 (LVRN…AMPV). The Ig-like 4 domain occupies 946–1030 (PKFLVDSSTK…LRTLQGKEVA (85 aa)). One can recognise a Fibronectin type-III 4 domain in the interval 1043 to 1137 (APGPIHLQEN…TSQPWCIPRQ (95 aa)). Residues 1151 to 1245 (PDLSQKPRFL…GQAVSTATLI (95 aa)) form the Ig-like 5 domain.

In terms of assembly, interacts with FLNC. Interacts with KY. As to expression, expressed in skeletal muscle.

The protein resides in the nucleus. Its subcellular location is the cytoplasm. It is found in the myofibril. It localises to the sarcomere. The protein localises to the z line. In Homo sapiens (Human), this protein is Immunoglobulin-like and fibronectin type III domain-containing protein 1 (IGFN1).